The primary structure comprises 527 residues: F-box protein SKIP2 (527 aa).

The F-box domain maps to 39-85; it reads DRDFTGDLPDECLAHVFQFLGAGDRKRCSLVCKRWLLVDGQSRHRLS.

In terms of assembly, part of a SCF (ASK-cullin-F-box) protein ligase complex. Interacts with SKP1A/ASK1, SKP1B/ASK2 and ASK11.

It localises to the nucleus. It participates in protein modification; protein ubiquitination. Functionally, component of SCF(ASK-cullin-F-box) E3 ubiquitin ligase complexes, which may mediate the ubiquitination and subsequent proteasomal degradation of target proteins. The polypeptide is F-box protein SKIP2 (SKIP2) (Arabidopsis thaliana (Mouse-ear cress)).